The chain runs to 477 residues: Ketoisovalerate oxidoreductase subunit VorA (477 aa).

In terms of assembly, heterotrimer of the VorA, VorB and VorC subunits.

It catalyses the reaction 3-methyl-2-oxobutanoate + 2 oxidized [2Fe-2S]-[ferredoxin] + CoA = 2-methylpropanoyl-CoA + 2 reduced [2Fe-2S]-[ferredoxin] + CO2 + H(+). The chain is Ketoisovalerate oxidoreductase subunit VorA (vorA) from Methanothermobacter thermautotrophicus (strain ATCC 29096 / DSM 1053 / JCM 10044 / NBRC 100330 / Delta H) (Methanobacterium thermoautotrophicum).